A 621-amino-acid chain; its full sequence is MALLQISEPGESPAPHQRRLAVGIDLGTTNSLVASVRSSVPEVLPDDQGRPLLPSVVRYLPTGGAHIGYKAQAEAVRDPKNTIISVKRFMGRGLKDVAHIENTPYDFVDAPGMVQLKTVAGVKSPVEVSAEILATLRQRAEDTLGDELVGAVITVPAYFDDAQRQATKDAAKLAGLNVLRLLNEPTAAAIAYGLDNGSEGIYAVYDLGGGTFDISVLKLTKGVFEVMSTGGDSALGGDDFDQRIVCWVVEQAGLQPLSAEDTRLLLNKARAAKEWLSTADSTEIDAMLSTGETVHLVLTAETFAELTATLVQKTLSPVRRALRDAGVTVEDVKGVVLVGGATRMPIIRRAVGQLFGQTPLTNLDPDQVVAIGAAMQANLLAGNRAPGEDWLLLDVIPLSLGVETMGGLVEKIIPRNSTIPVARAQEFTTFKDGQTAMAIHVLQGERELASDCRSLARFELRGIPPMVAGAARIRVTYQVDADGLLSVSARETVSGVEASIAVKPSYGLGDDDVARMLQEGFQSAEDDMRRRALAEERVEGERLLEALSQALAADGDLLSPEERAAIDTEIAALRTTMQGEDHRAIKDAVDALSHGTDEFAARRMDRGIRKALAGKRIEELG.

It belongs to the heat shock protein 70 family.

In terms of biological role, chaperone involved in the maturation of iron-sulfur cluster-containing proteins. Has a low intrinsic ATPase activity which is markedly stimulated by HscB. This Ralstonia pickettii (strain 12J) protein is Chaperone protein HscA homolog.